The sequence spans 282 residues: Aspergillopepsin-2 (282 aa).

An N-terminal signal peptide occupies residues 1–18; that stretch reads MKFSTILTGSLFATAALA. Propeptides lie at residues 19–59 and 99–109; these read APLT…GTTN and GGGYGYWKNKR. A compositionally biased stretch (basic residues) spans 27–39; that stretch reads ARKEARAAGKRHS. The segment at 27–46 is disordered; the sequence is ARKEARAAGKRHSNPPYIPG. At glutamine 110 the chain carries Pyrrolidone carboxylic acid. Cystine bridges form between cysteine 115–cysteine 139 and cysteine 127–cysteine 210.

This sequence belongs to the peptidase G1 family. Heterodimer of two noncovalently bound light and heavy chains.

It carries out the reaction Preferential cleavage in B chain of insulin: 3-Asn-|-Gln-4, 13-Gly-|-Ala-14, and 26-Tyr-|-Thr-27.. The chain is Aspergillopepsin-2 from Aspergillus niger.